The primary structure comprises 452 residues: Fructose-2,6-bisphosphatase (452 aa).

Positions 1–223 (MGYSTISNDN…VFYVMNIRPK (223 aa)) are 6-phosphofructo-2-kinase. 20–28 (GLPARGKSF) is a binding site for ATP. The beta-D-fructose 6-phosphate site is built by R53 and R78. The active site involves D104. T106 and R112 together coordinate beta-D-fructose 6-phosphate. ATP is bound at residue 143–148 (NAKDIG). The beta-D-fructose 6-phosphate site is built by R169 and Y173. The segment at 224–452 (PKYIWLSRHG…LNDSPLEDKF (229 aa)) is fructose-2,6-bisphosphatase. R231 is a binding site for beta-D-fructose 2,6-bisphosphate. Catalysis depends on H232, which acts as the Tele-phosphohistidine intermediate. Beta-D-fructose 2,6-bisphosphate-binding residues include N238 and G244. Residue E302 is the Proton donor/acceptor of the active site. Y313, R327, K331, Y342, Q368, and R372 together coordinate beta-D-fructose 2,6-bisphosphate. 324-327 (FKAR) contributes to the ATP binding site. ATP is bound by residues 368 to 372 (QAVLR) and Y404. S435 and S446 each carry phosphoserine.

This sequence in the C-terminal section; belongs to the phosphoglycerate mutase family.

The catalysed reaction is beta-D-fructose 2,6-bisphosphate + H2O = beta-D-fructose 6-phosphate + phosphate. Inhibited by fructose 6-P, activated by glycerol 3-P. Monofunctional, high-specificity fructose-2,6-bisphosphatase, which releases phosphate from the 2-position of fructose 2,6-bisphosphate. Has no detectable 6-phosphofructo-2-kinase activity. This Saccharomyces cerevisiae (strain ATCC 204508 / S288c) (Baker's yeast) protein is Fructose-2,6-bisphosphatase.